A 198-amino-acid polypeptide reads, in one-letter code: Ion-translocating oxidoreductase complex subunit B (198 aa).

Positions 1-28 (MIITTVYFILVAIAVLALIFGAILGFAS) are hydrophobic. One can recognise a 4Fe-4S domain in the interval 34–92 (EADPIVEKIDALLPQSQCGQCGYPGCKPYAEAIANGDDITKCIPGGQTVIVNIAELMGV). [4Fe-4S] cluster contacts are provided by Cys-51, Cys-54, Cys-59, Cys-75, Cys-115, Cys-118, Cys-121, Cys-125, Cys-145, Cys-148, Cys-151, and Cys-155. 4Fe-4S ferredoxin-type domains are found at residues 106–135 (MVAF…GTNK) and 136–165 (AMHT…MIKV).

Belongs to the 4Fe4S bacterial-type ferredoxin family. RnfB subfamily. In terms of assembly, the complex is composed of six subunits: RnfA, RnfB, RnfC, RnfD, RnfE and RnfG. [4Fe-4S] cluster serves as cofactor.

The protein resides in the cell inner membrane. Part of a membrane-bound complex that couples electron transfer with translocation of ions across the membrane. In Pasteurella multocida (strain Pm70), this protein is Ion-translocating oxidoreductase complex subunit B.